The chain runs to 488 residues: 3-octaprenyl-4-hydroxybenzoate carboxy-lyase (488 aa).

Asparagine 172 contributes to the Mn(2+) binding site. Residues isoleucine 175–arginine 177, arginine 189–leucine 191, and arginine 194–glycine 195 contribute to the prenylated FMN site. Residue glutamate 238 coordinates Mn(2+). Aspartate 287 acts as the Proton donor in catalysis.

The protein belongs to the UbiD family. Homohexamer. It depends on prenylated FMN as a cofactor. The cofactor is Mn(2+).

The protein localises to the cell membrane. The enzyme catalyses a 4-hydroxy-3-(all-trans-polyprenyl)benzoate + H(+) = a 2-(all-trans-polyprenyl)phenol + CO2. The protein operates within cofactor biosynthesis; ubiquinone biosynthesis. Its function is as follows. Catalyzes the decarboxylation of 3-octaprenyl-4-hydroxy benzoate to 2-octaprenylphenol, an intermediate step in ubiquinone biosynthesis. This Halorhodospira halophila (strain DSM 244 / SL1) (Ectothiorhodospira halophila (strain DSM 244 / SL1)) protein is 3-octaprenyl-4-hydroxybenzoate carboxy-lyase.